The primary structure comprises 648 residues: Threonine--tRNA ligase (648 aa).

In terms of domain architecture, TGS spans 1–61 (MIDIILPDGS…INTATVKAIT (61 aa)). The segment at 243 to 549 (DHRKLGRELE…LIEHYSGKLP (307 aa)) is catalytic. Residues C349, H400, and H526 each contribute to the Zn(2+) site.

The protein belongs to the class-II aminoacyl-tRNA synthetase family. In terms of assembly, homodimer. It depends on Zn(2+) as a cofactor.

The protein resides in the cytoplasm. The enzyme catalyses tRNA(Thr) + L-threonine + ATP = L-threonyl-tRNA(Thr) + AMP + diphosphate + H(+). Its function is as follows. Catalyzes the attachment of threonine to tRNA(Thr) in a two-step reaction: L-threonine is first activated by ATP to form Thr-AMP and then transferred to the acceptor end of tRNA(Thr). Also edits incorrectly charged L-seryl-tRNA(Thr). The polypeptide is Threonine--tRNA ligase (Orientia tsutsugamushi (strain Ikeda) (Rickettsia tsutsugamushi)).